A 209-amino-acid polypeptide reads, in one-letter code: MGKVYVFDHPLIQHKLTYIRDVKTGTKEFRELVDEVATLMAFEITRDLPLEEVNVETPVQMAKSNVIAGKKLGVVPILRAGLGMVDGILKLIPAAKVGHVGLYRDPETLKPVEYYVKLPSDVEEREFIVVDPMLATGGSAVEALNSLKKRGAKNIRFMCLIAAPEGVDEVQKHHPDVDIYIAALDEKLNEKGYIVPGLGDAGDRMFGTK.

Residues R79, R104, and 131 to 139 each bind 5-phospho-alpha-D-ribose 1-diphosphate; that span reads DPMLATGGS. Uracil is bound by residues I194 and 199 to 201; that span reads GDA. D200 serves as a coordination point for 5-phospho-alpha-D-ribose 1-diphosphate.

The protein belongs to the UPRTase family. Mg(2+) is required as a cofactor.

The enzyme catalyses UMP + diphosphate = 5-phospho-alpha-D-ribose 1-diphosphate + uracil. It functions in the pathway pyrimidine metabolism; UMP biosynthesis via salvage pathway; UMP from uracil: step 1/1. With respect to regulation, allosterically activated by GTP. In terms of biological role, catalyzes the conversion of uracil and 5-phospho-alpha-D-ribose 1-diphosphate (PRPP) to UMP and diphosphate. The polypeptide is Uracil phosphoribosyltransferase (Bacillus licheniformis (strain ATCC 14580 / DSM 13 / JCM 2505 / CCUG 7422 / NBRC 12200 / NCIMB 9375 / NCTC 10341 / NRRL NRS-1264 / Gibson 46)).